The primary structure comprises 161 residues: Protein shisa-like-2B (161 aa).

Residues 65 to 85 traverse the membrane as a helical segment; that stretch reads IGALIGLGIAALVLLAFVISV. Residues 115-134 form a disordered region; the sequence is QEGNSNRKSKAPRSNAASNS.

This sequence belongs to the shisa family.

The protein localises to the membrane. The polypeptide is Protein shisa-like-2B (SHISAL2B) (Bos taurus (Bovine)).